We begin with the raw amino-acid sequence, 244 residues long: DNA repair protein RecO (244 aa).

The protein belongs to the RecO family.

Its function is as follows. Involved in DNA repair and RecF pathway recombination. The polypeptide is DNA repair protein RecO (Polynucleobacter asymbioticus (strain DSM 18221 / CIP 109841 / QLW-P1DMWA-1) (Polynucleobacter necessarius subsp. asymbioticus)).